The primary structure comprises 114 residues: Ig heavy chain V region GOM (114 aa).

The Ig-like domain maps to 1-112; it reads EVQLVESGGD…YWGQGTLVTV (112 aa).

The chain is Ig heavy chain V region GOM from Canis lupus familiaris (Dog).